The chain runs to 698 residues: Serine/threonine-protein kinase Nek8 (698 aa).

Residues 4 to 258 (YERIRVVGRG…LSHIMAQPLC (255 aa)) form the Protein kinase domain. Residues 10-18 (VGRGAFGIV) and Lys33 contribute to the ATP site. Residue Asp128 is the Proton acceptor of the active site. Thr162 carries the post-translational modification Phosphothreonine; by autocatalysis. The disordered stretch occupies residues 278–309 (EKSLTPGPPIASGSTGSRATSARCRGVPRGPV). Low complexity predominate over residues 288 to 309 (ASGSTGSRATSARCRGVPRGPV). 5 RCC1 repeats span residues 416 to 467 (GIIM…LSTD), 468 to 519 (GELF…LTSP), 520 to 585 (GRVL…ITAS), 586 to 637 (GDCY…VGAE), and 638 to 690 (GEVY…AVRS).

The protein belongs to the protein kinase superfamily. NEK Ser/Thr protein kinase family. NIMA subfamily. As to quaternary structure, interacts with PKD2; may regulate PKD2 targeting to the cilium. Interacts with ANKS6. Component of a complex containing at least ANKS6, INVS, NEK8 and NPHP3. ANKS6 may organize complex assembly by linking INVS and NPHP3 to NEK8 and INVS may target the complex to the proximal ciliary axoneme. Interacts with ANKS3. Requires Mg(2+) as cofactor. As to expression, kidney, liver, and testis.

The protein resides in the cytoplasm. It is found in the cytoskeleton. It localises to the cell projection. The protein localises to the cilium. Its subcellular location is the microtubule organizing center. The protein resides in the centrosome. It is found in the cilium axoneme. The enzyme catalyses L-seryl-[protein] + ATP = O-phospho-L-seryl-[protein] + ADP + H(+). It catalyses the reaction L-threonyl-[protein] + ATP = O-phospho-L-threonyl-[protein] + ADP + H(+). Functionally, required for renal tubular integrity. May regulate local cytoskeletal structure in kidney tubule epithelial cells. May regulate ciliary biogenesis through targeting of proteins to the cilia. Plays a role in organogenesis and is involved in the regulation of the Hippo signaling pathway. The sequence is that of Serine/threonine-protein kinase Nek8 (Nek8) from Mus musculus (Mouse).